A 412-amino-acid polypeptide reads, in one-letter code: cAMP-dependent protein kinase regulatory subunit (412 aa).

Over residues 1-11 (MSNYSHSSNNP) the composition is skewed to polar residues. The interval 1 to 146 (MSNYSHSSNN…TPPSHPKSEE (146 aa)) is disordered. Basic and acidic residues predominate over residues 16-29 (STKEDKPSSFHKIA). The interval 23–159 (SSFHKIAEDE…RLKTAVSNNF (137 aa)) is dimerization and phosphorylation. Polar residues-rich tracts occupy residues 49–60 (NADNSAGGNNPL) and 119–138 (TSVSAESLNPTSAGSDSWTP). Ser-120 is modified (phosphoserine). 3',5'-cyclic AMP contacts are provided by residues 160-291 (LFSH…EEVP), Glu-238, Arg-247, 292-405 (LLSS…TEYS), Glu-359, and Arg-368.

It belongs to the cAMP-dependent kinase regulatory chain family. In terms of assembly, tetramer, composed of 2 regulatory (R) and 2 catalytic (C) subunits. In the presence of cAMP it dissociates into 2 active monomeric C subunits and an R dimer.

This is cAMP-dependent protein kinase regulatory subunit (pkaR) from Emericella nidulans (strain FGSC A4 / ATCC 38163 / CBS 112.46 / NRRL 194 / M139) (Aspergillus nidulans).